The sequence spans 513 residues: MQLNSTEISDLIKQRIESFEVVSEARNEGTIVSVSDGIIRIHGLADVMQGEMIELPGGRYALALNLERDSVGAVVMGPYADLKEGMKVTGTGRILEVPVGPELLGRVVNTLGEPIDGKGPIEAKMTSPVEVIAPGVIDRKSVDQPVQTGYKSVDSMIPIGRGQRELIIGDRQIGKTALAIDAIINQKDSGIFSIYVAIGQKASTIANVVRKLEEHGALQNTIVVVASASESAALQYLAPYAGCAMGEYFRDRGEDALIVYDDLSKQAVAYRQISLLLKRPPGREAFPGDVFYLHSRLLERAARVNEEYVERFTNGEVKGKTGSLTALPIIETQAGDVSAFVPTNVISITDGQIFLQTELFNAGVRPAVDPGISVSRVGGSAQTKIIKKLSGGIRTALAAYRELAAFAQFSSDLDEATKKQLDHGQKVTELMKQKQYAPMSVFDQALTIFAAERGYLDDVELNKVLDFEAALLSYARGQYAELAAEIDKSGAYNDEIEAQLKKLTDDFKATQTW.

169–176 is an ATP binding site; it reads GDRQIGKT.

The protein belongs to the ATPase alpha/beta chains family. In terms of assembly, F-type ATPases have 2 components, CF(1) - the catalytic core - and CF(0) - the membrane proton channel. CF(1) has five subunits: alpha(3), beta(3), gamma(1), delta(1), epsilon(1). CF(0) has three main subunits: a(1), b(2) and c(9-12). The alpha and beta chains form an alternating ring which encloses part of the gamma chain. CF(1) is attached to CF(0) by a central stalk formed by the gamma and epsilon chains, while a peripheral stalk is formed by the delta and b chains.

The protein resides in the cell inner membrane. The enzyme catalyses ATP + H2O + 4 H(+)(in) = ADP + phosphate + 5 H(+)(out). Produces ATP from ADP in the presence of a proton gradient across the membrane. The alpha chain is a regulatory subunit. This chain is ATP synthase subunit alpha, found in Vibrio alginolyticus.